A 690-amino-acid polypeptide reads, in one-letter code: Methionine--tRNA ligase (690 aa).

The short motif at 12–22 is the 'HIGH' region element; that stretch reads PYANGPLHLGH. Zn(2+)-binding residues include Cys144, Cys147, Cys157, and Cys160. A 'KMSKS' region motif is present at residues 333-337; that stretch reads QFSKS. Lys336 is an ATP binding site. The tRNA-binding domain maps to 535–632; it reads KKINIDLMVG…VNADDGSRMK (98 aa).

It belongs to the class-I aminoacyl-tRNA synthetase family. MetG type 1 subfamily. In terms of assembly, homodimer. Zn(2+) is required as a cofactor.

It is found in the cytoplasm. The catalysed reaction is tRNA(Met) + L-methionine + ATP = L-methionyl-tRNA(Met) + AMP + diphosphate. Functionally, is required not only for elongation of protein synthesis but also for the initiation of all mRNA translation through initiator tRNA(fMet) aminoacylation. The chain is Methionine--tRNA ligase from Picrophilus torridus (strain ATCC 700027 / DSM 9790 / JCM 10055 / NBRC 100828 / KAW 2/3).